An 88-amino-acid polypeptide reads, in one-letter code: Long neurotoxin 31 (88 aa).

Residues Met-1–Ser-21 form the signal peptide. 5 cysteine pairs are disulfide-bonded: Cys-24–Cys-42, Cys-35–Cys-63, Cys-48–Cys-52, Cys-67–Cys-78, and Cys-79–Cys-84.

The protein belongs to the three-finger toxin family. Long-chain subfamily. Type II alpha-neurotoxin sub-subfamily. In terms of tissue distribution, expressed by the venom gland.

It localises to the secreted. Functionally, binds with high affinity to muscular (alpha-1/CHRNA1) and neuronal (alpha-7/CHRNA7) nicotinic acetylcholine receptor (nAChR) and inhibits acetylcholine from binding to the receptor, thereby impairing neuromuscular and neuronal transmission. The polypeptide is Long neurotoxin 31 (Drysdalia coronoides (White-lipped snake)).